The chain runs to 1394 residues: DNA-directed RNA polymerase subunit beta'' (1394 aa).

Zn(2+) contacts are provided by Cys-224, Cys-295, Cys-302, and Cys-305.

This sequence belongs to the RNA polymerase beta' chain family. RpoC2 subfamily. As to quaternary structure, in plastids the minimal PEP RNA polymerase catalytic core is composed of four subunits: alpha, beta, beta', and beta''. When a (nuclear-encoded) sigma factor is associated with the core the holoenzyme is formed, which can initiate transcription. It depends on Zn(2+) as a cofactor.

The protein localises to the plastid. It localises to the chloroplast. The enzyme catalyses RNA(n) + a ribonucleoside 5'-triphosphate = RNA(n+1) + diphosphate. In terms of biological role, DNA-dependent RNA polymerase catalyzes the transcription of DNA into RNA using the four ribonucleoside triphosphates as substrates. This chain is DNA-directed RNA polymerase subunit beta'', found in Cucumis sativus (Cucumber).